We begin with the raw amino-acid sequence, 311 residues long: Large ribosomal subunit protein uL18 (311 aa).

It belongs to the universal ribosomal protein uL18 family. Component of the large ribosomal subunit (LSU).

The protein resides in the cytoplasm. Its subcellular location is the nucleus. Functionally, component of the ribosome, a large ribonucleoprotein complex responsible for the synthesis of proteins in the cell. The small ribosomal subunit (SSU) binds messenger RNAs (mRNAs) and translates the encoded message by selecting cognate aminoacyl-transfer RNA (tRNA) molecules. The large subunit (LSU) contains the ribosomal catalytic site termed the peptidyl transferase center (PTC), which catalyzes the formation of peptide bonds, thereby polymerizing the amino acids delivered by tRNAs into a polypeptide chain. The nascent polypeptides leave the ribosome through a tunnel in the LSU and interact with protein factors that function in enzymatic processing, targeting, and the membrane insertion of nascent chains at the exit of the ribosomal tunnel. The polypeptide is Large ribosomal subunit protein uL18 (RPL5) (Eimeria tenella (Coccidian parasite)).